The chain runs to 311 residues: Malate dehydrogenase (311 aa).

NAD(+) contacts are provided by residues Gly7–Gly13 and Asp34. Residues Arg81 and Arg87 each coordinate substrate. NAD(+) is bound by residues Asn94 and Ile117 to Asn119. Positions 119 and 153 each coordinate substrate. The Proton acceptor role is filled by His177. Position 227 (Met227) interacts with NAD(+).

This sequence belongs to the LDH/MDH superfamily. MDH type 1 family. In terms of assembly, homodimer.

It catalyses the reaction (S)-malate + NAD(+) = oxaloacetate + NADH + H(+). In terms of biological role, catalyzes the reversible oxidation of malate to oxaloacetate. The polypeptide is Malate dehydrogenase (Vibrio atlanticus (strain LGP32) (Vibrio splendidus (strain Mel32))).